A 345-amino-acid chain; its full sequence is MIDNKRGSSYLNSLPEGLSAEECDRYSAVVSLCWNVLGELQDVEFKWHEPLAYHTTFRVGGPAACLARPRSESALLALLERVRENSVPYVVLGGGSNVLVTDGPIPALVIQLIHVAAGLAFNKGRSSSRPLVVVGAGVPISRLLRFCVRNELGGLECLVGIPGSVGGAVVMNAGTAEGTIAEALEWLDALDGAGQRQLVFKADLPAGYRSMGLPEAWLILGGAFRLHVSSGRSLKREMRSLMVRRKATQPLGRPSAGCVFKNPVEAPAGALIERAGLKGFRMGNAQVSDKHANWIINLGSARARDILALISLVENEVFGKFGVRLEREIRILSPEKNSLNQMLNS.

In terms of domain architecture, FAD-binding PCMH-type spans 59–254 (VGGPAACLAR…RKATQPLGRP (196 aa)). The active site involves arginine 209. Cysteine 258 acts as the Proton donor in catalysis. The active site involves glutamate 328.

Belongs to the MurB family. FAD serves as cofactor.

The protein resides in the cytoplasm. It catalyses the reaction UDP-N-acetyl-alpha-D-muramate + NADP(+) = UDP-N-acetyl-3-O-(1-carboxyvinyl)-alpha-D-glucosamine + NADPH + H(+). It functions in the pathway cell wall biogenesis; peptidoglycan biosynthesis. Functionally, cell wall formation. The protein is UDP-N-acetylenolpyruvoylglucosamine reductase of Syntrophobacter fumaroxidans (strain DSM 10017 / MPOB).